The following is a 185-amino-acid chain: Large ribosomal subunit protein uL5 (185 aa).

Belongs to the universal ribosomal protein uL5 family. Part of the 50S ribosomal subunit; part of the 5S rRNA/L5/L18/L25 subcomplex. Contacts the 5S rRNA and the P site tRNA. Forms a bridge to the 30S subunit in the 70S ribosome.

This is one of the proteins that bind and probably mediate the attachment of the 5S RNA into the large ribosomal subunit, where it forms part of the central protuberance. In the 70S ribosome it contacts protein S13 of the 30S subunit (bridge B1b), connecting the 2 subunits; this bridge is implicated in subunit movement. Contacts the P site tRNA; the 5S rRNA and some of its associated proteins might help stabilize positioning of ribosome-bound tRNAs. The chain is Large ribosomal subunit protein uL5 from Afipia carboxidovorans (strain ATCC 49405 / DSM 1227 / KCTC 32145 / OM5) (Oligotropha carboxidovorans).